Here is a 390-residue protein sequence, read N- to C-terminus: Curcumin synthase 3 (390 aa).

Cys-164 is a catalytic residue.

This sequence belongs to the thiolase-like superfamily. Chalcone/stilbene synthases family. As to quaternary structure, homodimer.

The enzyme catalyses (E)-feruloylacetyl-CoA + (E)-feruloyl-CoA + H2O = curcumin + CO2 + 2 CoA. It catalyses the reaction (E)-feruloylacetyl-CoA + (E)-4-coumaroyl-CoA + H2O = demethoxycurcumin + CO2 + 2 CoA. It carries out the reaction (4-coumaroyl)acetyl-CoA + 4-coumaroyl-CoA + H2O = bisdemethoxycurcumin + CO2 + 2 CoA. It functions in the pathway secondary metabolite biosynthesis; flavonoid biosynthesis. Functionally, catalyzes the synthesis of curcumin by condensing feruloyl-CoA with a diketide-CoA in the curcuminoid biosynthesis. Also acts as a demethoxycurcumin synthase by accepting 4-coumaroyl-CoA as a starter substrate instead of feruloyl-CoA. The polypeptide is Curcumin synthase 3 (CURS3) (Curcuma longa (Turmeric)).